The chain runs to 301 residues: Mitochondrial carnitine/acylcarnitine carrier protein (301 aa).

N-acetylalanine is present on A2. Over 2–12 (ADQPKPISPLK) the chain is Cytoplasmic. Solcar repeat units lie at residues 8–99 (ISPL…GKKL), 108–196 (LSYP…VKNI), and 207–293 (LSVP…AMKF). The helical transmembrane segment at 13 to 31 (NLLAGGFGGVCLVFVGHPL) threads the bilayer. Residues 32-73 (DTVKVRLQTQPPSLPGQPPMYSGTFDCFRKTLFREGIRGLYR) lie on the Mitochondrial matrix side of the membrane. Residues 74–93 (GMAAPIIGVTPMFAVCFFGF) form a helical membrane-spanning segment. Topologically, residues 94–112 (GLGKKLQQKHPEDVLSYPQ) are cytoplasmic. The chain crosses the membrane as a helical span at residues 113-131 (LFAAGMLSGIFTTGIMTPG). Residues 132–170 (ERIKCLLQIQASSGETKYTGTLDCAKKLYQEFGIRGIYK) lie on the Mitochondrial matrix side of the membrane. N6-acetyllysine occurs at positions 148 and 157. An N6-acetyllysine; alternate modification is found at K170. K170 carries the post-translational modification N6-succinyllysine; alternate. A helical transmembrane segment spans residues 171–190 (GTVVTLMRDVPASGMYFMTY). The Cytoplasmic segment spans residues 191-211 (EWVKNIFTPEGKRVSELSVPR). The chain crosses the membrane as a helical span at residues 212 to 230 (VLVAGGIAGIFNWAVAIPP). Residues 231–267 (DVLKSRFQTAPPGKYPNGFRDVLRELIPDEGVTSLYK) are Mitochondrial matrix-facing. Residues 268 to 287 (GFNAVMIRAFPANAACFLGF) traverse the membrane as a helical segment. Residues 288 to 301 (EVAMKFLNWATPNL) are Cytoplasmic-facing.

It belongs to the mitochondrial carrier (TC 2.A.29) family.

It is found in the mitochondrion inner membrane. The enzyme catalyses O-acetyl-(R)-carnitine(in) + (R)-carnitine(out) = O-acetyl-(R)-carnitine(out) + (R)-carnitine(in). It catalyses the reaction an O-acyl-(R)-carnitine(in) + (R)-carnitine(out) = an O-acyl-(R)-carnitine(out) + (R)-carnitine(in). The catalysed reaction is O-propanoyl-(R)-carnitine(in) + (R)-carnitine(out) = O-propanoyl-(R)-carnitine(out) + (R)-carnitine(in). It carries out the reaction O-hexadecanoyl-(R)-carnitine(in) + (R)-carnitine(out) = O-hexadecanoyl-(R)-carnitine(out) + (R)-carnitine(in). The enzyme catalyses O-octanoyl-(R)-carnitine(in) + (R)-carnitine(out) = O-octanoyl-(R)-carnitine(out) + (R)-carnitine(in). It catalyses the reaction (R)-carnitine(in) = (R)-carnitine(out). Functionally, mediates the electroneutral exchange of acylcarnitines (O-acyl-(R)-carnitine or L-acylcarnitine) of different acyl chain lengths (ranging from O-acetyl-(R)-carnitine to long-chain O-acyl-(R)-carnitines) with free carnitine ((R)-carnitine or L-carnitine) across the mitochondrial inner membrane, via a ping-pong mechanism. Key player in the mitochondrial oxidation pathway, it translocates the fatty acids in the form of acylcarnitines into the mitochondrial matrix, where the carnitine palmitoyltransferase 2 (CPT-2) activates them to undergo fatty acid beta-oxidation. Catalyzes the unidirectional transport (uniport) of carnitine at lower rates than the antiport (exchange). This is Mitochondrial carnitine/acylcarnitine carrier protein (SLC25A20) from Macaca fascicularis (Crab-eating macaque).